Here is a 234-residue protein sequence, read N- to C-terminus: MSLQTPTESPSSAPRLLVRQLGRRPYQPVWDAMKAFTDSRTPDTPDEFWVVEHDPVYTQGQAGKAEHLLAPGDIPVVQSDRGGQVTYHGPGQLVLYVLVDVRRSKLTVRELVTCLETAIINTLAKSGIEAYAKPDAPGVYVKNQLGAALQTEAKLASLGLRIRKGCSFHGLALNVNMDMTPFLRINPCGYAGMAMTQTSALGGPQSVAEAQAMLVAELASLIGYETITNTEEAA.

The BPL/LPL catalytic domain occupies 42 to 226 (PDTPDEFWVV…ELASLIGYET (185 aa)). Substrate-binding positions include 81–88 (RGGQVTYH), 157–159 (SLG), and 170–172 (GLA). The active-site Acyl-thioester intermediate is cysteine 188.

It belongs to the LipB family.

The protein resides in the cytoplasm. The enzyme catalyses octanoyl-[ACP] + L-lysyl-[protein] = N(6)-octanoyl-L-lysyl-[protein] + holo-[ACP] + H(+). Its pathway is protein modification; protein lipoylation via endogenous pathway; protein N(6)-(lipoyl)lysine from octanoyl-[acyl-carrier-protein]: step 1/2. Catalyzes the transfer of endogenously produced octanoic acid from octanoyl-acyl-carrier-protein onto the lipoyl domains of lipoate-dependent enzymes. Lipoyl-ACP can also act as a substrate although octanoyl-ACP is likely to be the physiological substrate. The protein is Octanoyltransferase of Aeromonas hydrophila subsp. hydrophila (strain ATCC 7966 / DSM 30187 / BCRC 13018 / CCUG 14551 / JCM 1027 / KCTC 2358 / NCIMB 9240 / NCTC 8049).